The chain runs to 712 residues: Probable metal-nicotianamine transporter YSL11 (712 aa).

Residues 25-48 (RRNTTAAARGNAGEEEEEAEAVAP) are disordered. The next 14 membrane-spanning stretches (helical) occupy residues 70–90 (AFVV…KLSL), 93–113 (GVIP…VRLW), 138–158 (CVVS…LFGM), 180–200 (LGWI…ALVP), 242–262 (LGKY…YTAG), 300–320 (IVNV…WPLI), 345–365 (VFIT…KVFG), 418–438 (VAIG…PLII), 446–466 (ILIA…GSGL), 478–498 (LAIF…LVGL), 532–552 (FVSQ…VFWL), 593–613 (LTLC…KDLV), 631–651 (FYLG…LYFW), and 666–686 (VASG…VLSL).

Belongs to the YSL (TC 2.A.67.2) family.

The protein resides in the membrane. In terms of biological role, may be involved in the transport of nicotianamine-chelated metals. The protein is Probable metal-nicotianamine transporter YSL11 (YSL11) of Oryza sativa subsp. japonica (Rice).